Consider the following 321-residue polypeptide: MAKGLLIVNLGSPVSPETKDVRRYLREFLSDQNVITMPKALWQPILRGFILPFRSWRSATFYKHEWTQAGSPLIAYTQVTRDRLRERLPDWDVQMAMNYGGEYPIGETLQTMAARGDAPIVVIPLFPEYTQSTTKTILDKVAASGVKTVVIDRFYDHSDYQKILAQQIDDAYEAGAYDTVILSYHGIPTAMVRHGDPYQQECETTTAGVKQYLKKVPQTKVEMCYQSKFGPVPWLKPYLRNRLMELAALGKRNVLVATPSFVADCLETLEENNVQNYQTFRANGGKNFATVRPMNGCEPFCDFLAKLAKDKIAAEANHGKA.

Residues histidine 185 and glutamate 267 each contribute to the Fe(2+) site.

Belongs to the ferrochelatase family.

The protein resides in the cytoplasm. The enzyme catalyses Fe-coproporphyrin III + 2 H(+) = coproporphyrin III + Fe(2+). The protein operates within porphyrin-containing compound metabolism; protoheme biosynthesis. Its function is as follows. Involved in coproporphyrin-dependent heme b biosynthesis. Catalyzes the insertion of ferrous iron into coproporphyrin III to form Fe-coproporphyrin III. In Lacticaseibacillus casei (strain BL23) (Lactobacillus casei), this protein is Coproporphyrin III ferrochelatase.